Here is an 80-residue protein sequence, read N- to C-terminus: Serine protease inhibitor Kazal-type 6 (80 aa).

The signal sequence occupies residues 1 to 23 (MKLSGMFLLLSLALFCFLTGVFS). Gln-24 carries the pyrrolidone carboxylic acid modification. Residues 24–80 (QGGQVDCGEFQDPKVYCTRESNPHCGSDGQTYGNKCAFCKAIVKSGGKISLKHPGKC) enclose the Kazal-like domain. 3 disulfides stabilise this stretch: Cys-30/Cys-62, Cys-40/Cys-59, and Cys-48/Cys-80.

The protein resides in the secreted. Functionally, serine protease inhibitor selective for kallikreins. Efficiently inhibits KLK4, KLK5, KLK6, KLK7, KLK12, KLK13 and KLK14. Doesn't inhibit KLK8. The polypeptide is Serine protease inhibitor Kazal-type 6 (SPINK6) (Homo sapiens (Human)).